The chain runs to 1215 residues: DNA-directed RNA polymerase subunit beta' (1215 aa).

4 residues coordinate Zn(2+): Cys60, Cys62, Cys75, and Cys78. Positions 450, 452, and 454 each coordinate Mg(2+). The Zn(2+) site is built by Cys818, Cys892, Cys899, and Cys902.

The protein belongs to the RNA polymerase beta' chain family. The RNAP catalytic core consists of 2 alpha, 1 beta, 1 beta' and 1 omega subunit. When a sigma factor is associated with the core the holoenzyme is formed, which can initiate transcription. It depends on Mg(2+) as a cofactor. Requires Zn(2+) as cofactor.

It carries out the reaction RNA(n) + a ribonucleoside 5'-triphosphate = RNA(n+1) + diphosphate. DNA-dependent RNA polymerase catalyzes the transcription of DNA into RNA using the four ribonucleoside triphosphates as substrates. This is DNA-directed RNA polymerase subunit beta' from Streptococcus sanguinis (strain SK36).